The following is a 173-amino-acid chain: Dual-action ribosomal maturation protein DarP (173 aa).

Belongs to the DarP family.

The protein resides in the cytoplasm. Functionally, member of a network of 50S ribosomal subunit biogenesis factors which assembles along the 30S-50S interface, preventing incorrect 23S rRNA structures from forming. Promotes peptidyl transferase center (PTC) maturation. This chain is Dual-action ribosomal maturation protein DarP, found in Pseudomonas putida (strain W619).